The following is a 148-amino-acid chain: Large ribosomal subunit protein bL9 (148 aa).

In terms of assembly, part of the 50S ribosomal subunit.

In terms of biological role, binds to the 23S rRNA. Extends more that 50 Angstroms beyond the surface of the 70S ribosome. The polypeptide is Large ribosomal subunit protein bL9 (rplI) (Thermus thermophilus (strain ATCC 27634 / DSM 579 / HB8)).